The sequence spans 161 residues: QLLILCLVTVINSENSTDNSTENTIENEIENATETELSEAIENETENVTETELSEAIENETENVTETELPEIIENETKIEALNLPQNPKQKYCKSEGQYCSRTIFHRCCGNLVCQLHGFFNGTCVQCLAERKFCIWSSECCSKRCRLFRCRKNPYVQVIPY.

The first 13 residues, 1-13 (QLLILCLVTVINS), serve as a signal peptide directing secretion. N-linked (GlcNAc...) asparagine glycosylation is found at N15, N19, N31, N43, N47, N59, N63, N75, and N121. Cystine bridges form between C127/C141, C134/C145, and C140/C150.

Belongs to the UPF0506 family.

It is found in the secreted. This Schistosoma japonicum (Blood fluke) protein is UPF0506 protein SJCHGC02965.